We begin with the raw amino-acid sequence, 309 residues long: Taste receptor type 2 member 8 (309 aa).

The Extracellular portion of the chain corresponds to M1 to N7. Residues I8–A28 traverse the membrane as a helical segment. Over L29 to N50 the chain is Cytoplasmic. Residues L51–L71 traverse the membrane as a helical segment. Residues N72–Q82 lie on the Extracellular side of the membrane. Residues I83 to L103 form a helical membrane-spanning segment. Residues N104–H131 lie on the Cytoplasmic side of the membrane. Residues W132–L152 traverse the membrane as a helical segment. Residues S153–T184 are Extracellular-facing. A glycan (N-linked (GlcNAc...) asparagine) is linked at N167. Residues L185–V205 form a helical membrane-spanning segment. At R206 to S239 the chain is on the cytoplasmic side. A helical membrane pass occupies residues F240–M260. The Extracellular segment spans residues T261–A266. Residues V267–V287 form a helical membrane-spanning segment. Residues L288–I309 are Cytoplasmic-facing.

The protein belongs to the G-protein coupled receptor T2R family. In terms of tissue distribution, expressed in subsets of taste receptor cells of the tongue and palate epithelium and exclusively in gustducin-positive cells.

The protein resides in the membrane. Its function is as follows. Receptor that may play a role in the perception of bitterness and is gustducin-linked. May play a role in sensing the chemical composition of the gastrointestinal content. The activity of this receptor may stimulate alpha gustducin, mediate PLC-beta-2 activation and lead to the gating of TRPM5. The sequence is that of Taste receptor type 2 member 8 (TAS2R8) from Homo sapiens (Human).